The chain runs to 60 residues: Large ribosomal subunit protein bL32 (60 aa).

The segment at 1–25 (MAVQQNKKSPSKRGMHRSHNALNVP) is disordered. Basic residues predominate over residues 9–19 (SPSKRGMHRSH).

The protein belongs to the bacterial ribosomal protein bL32 family.

This Polaromonas naphthalenivorans (strain CJ2) protein is Large ribosomal subunit protein bL32.